The sequence spans 933 residues: Bromodomain testis-specific protein (933 aa).

Positions 1–21 (MSMSSRHLHSSIVNPPPPEYI) are disordered. One can recognise a Bromo 1 domain in the interval 28-134 (RLTNQLQYLE…KVFMEKIAEM (107 aa)). Residues 214-225 (KGIKRKADTTTP) carry the Nuclear localization signal motif. The interval 235–263 (ESSPTLSEPKPNKILSGTEKTRSAETSAV) is disordered. The region spanning 278 to 385 (NQICEQLKHC…DVFEGMFAKI (108 aa)) is the Bromo 2 domain. Disordered regions lie at residues 398–425 (RYKTSTEESSSSSSSEQSSSSDSEDERA), 576–610 (KPSSIKSLKSKEQLNKEKKQELEKRLRDVSGQLSS), and 627–662 (GGPSRLSESSTSSSASDVSNSSDSSSSDSSDSESAT). The segment covering 404–418 (EESSSSSSSEQSSSS) has biased composition (low complexity). A coiled-coil region spans residues 423-448 (ERAQHLALLQEQLRAVQEQLKALTET). The 83-residue stretch at 495 to 577 (VSDEEEDVKP…VCLRKRPKKP (83 aa)) folds into the NET domain. A compositionally biased stretch (basic and acidic residues) spans 584-603 (KSKEQLNKEKKQELEKRLRD). Low complexity predominate over residues 630 to 660 (SRLSESSTSSSASDVSNSSDSSSSDSSDSES). A coiled-coil region spans residues 829-917 (AKEERERALK…RREAMAGTID (89 aa)).

Belongs to the BET family.

It is found in the nucleus. Functionally, testis-specific chromatin protein that specifically binds histone H4 acetylated at 'Lys-5' and 'Lys-8' (H4K5ac and H4K8ac, respectively) and plays a key role in spermatogenesis. Required in late pachytene spermatocytes: plays a role in meiotic and post-meiotic cells by binding to acetylated histones at the promoter of specific meiotic and post-meiotic genes, facilitating their activation at the appropriate time. In the post-meiotic phase of spermatogenesis, binds to hyperacetylated histones and participates in their general removal from DNA. Also recognizes and binds a subset of butyrylated histones: able to bind histone H4 butyrylated at 'Lys-8' (H4K8ac), while it is not able to bind H4 butyrylated at 'Lys-5' (H4K5ac). This chain is Bromodomain testis-specific protein (brdt), found in Xenopus tropicalis (Western clawed frog).